The chain runs to 392 residues: Na(+)/H(+) antiporter NhaA (392 aa).

A run of 11 helical transmembrane segments spans residues 17 to 37 (ILLI…LSAL), 59 to 79 (LILW…GLEV), 95 to 115 (IFPA…YLFF), 125 to 145 (GWAI…ALLG), 154 to 174 (VFLL…IALF), 179 to 199 (VALV…ILNW), 213 to 233 (FILW…GVIV), 254 to 274 (VLHP…NAGV), 290 to 310 (VGIA…FSWV), 328 to 348 (IFAV…IAGL), and 363 to 383 (LGIL…LNSV).

It belongs to the NhaA Na(+)/H(+) (TC 2.A.33) antiporter family.

The protein localises to the cell inner membrane. The catalysed reaction is Na(+)(in) + 2 H(+)(out) = Na(+)(out) + 2 H(+)(in). Its function is as follows. Na(+)/H(+) antiporter that extrudes sodium in exchange for external protons. In Proteus mirabilis (strain HI4320), this protein is Na(+)/H(+) antiporter NhaA.